Consider the following 93-residue polypeptide: Pyrimidine/purine nucleoside phosphorylase (93 aa).

It belongs to the nucleoside phosphorylase PpnP family.

The catalysed reaction is a purine D-ribonucleoside + phosphate = a purine nucleobase + alpha-D-ribose 1-phosphate. It catalyses the reaction adenosine + phosphate = alpha-D-ribose 1-phosphate + adenine. The enzyme catalyses cytidine + phosphate = cytosine + alpha-D-ribose 1-phosphate. It carries out the reaction guanosine + phosphate = alpha-D-ribose 1-phosphate + guanine. The catalysed reaction is inosine + phosphate = alpha-D-ribose 1-phosphate + hypoxanthine. It catalyses the reaction thymidine + phosphate = 2-deoxy-alpha-D-ribose 1-phosphate + thymine. The enzyme catalyses uridine + phosphate = alpha-D-ribose 1-phosphate + uracil. It carries out the reaction xanthosine + phosphate = alpha-D-ribose 1-phosphate + xanthine. In terms of biological role, catalyzes the phosphorolysis of diverse nucleosides, yielding D-ribose 1-phosphate and the respective free bases. Can use uridine, adenosine, guanosine, cytidine, thymidine, inosine and xanthosine as substrates. Also catalyzes the reverse reactions. In Pseudomonas paraeruginosa (strain DSM 24068 / PA7) (Pseudomonas aeruginosa (strain PA7)), this protein is Pyrimidine/purine nucleoside phosphorylase.